Consider the following 515-residue polypeptide: 2,3-bisphosphoglycerate-independent phosphoglycerate mutase (515 aa).

Mn(2+) contacts are provided by Asp-14 and Ser-64. Ser-64 functions as the Phosphoserine intermediate in the catalytic mechanism. Substrate-binding positions include His-125, 155–156 (RD), Arg-187, Arg-193, 263–266 (RADR), and Lys-337. The Mn(2+) site is built by Asp-404, His-408, Asp-445, His-446, and His-464.

It belongs to the BPG-independent phosphoglycerate mutase family. Monomer. Mn(2+) is required as a cofactor.

The enzyme catalyses (2R)-2-phosphoglycerate = (2R)-3-phosphoglycerate. The protein operates within carbohydrate degradation; glycolysis; pyruvate from D-glyceraldehyde 3-phosphate: step 3/5. Its function is as follows. Catalyzes the interconversion of 2-phosphoglycerate and 3-phosphoglycerate. The protein is 2,3-bisphosphoglycerate-independent phosphoglycerate mutase of Yersinia pseudotuberculosis serotype O:1b (strain IP 31758).